A 432-amino-acid polypeptide reads, in one-letter code: Enolase (432 aa).

Q163 contributes to the (2R)-2-phosphoglycerate binding site. The Proton donor role is filled by E205. 3 residues coordinate Mg(2+): D242, E285, and D312. K337, R366, S367, and K388 together coordinate (2R)-2-phosphoglycerate. K337 functions as the Proton acceptor in the catalytic mechanism.

The protein belongs to the enolase family. The cofactor is Mg(2+).

It localises to the cytoplasm. The protein resides in the secreted. Its subcellular location is the cell surface. It carries out the reaction (2R)-2-phosphoglycerate = phosphoenolpyruvate + H2O. The protein operates within carbohydrate degradation; glycolysis; pyruvate from D-glyceraldehyde 3-phosphate: step 4/5. Catalyzes the reversible conversion of 2-phosphoglycerate (2-PG) into phosphoenolpyruvate (PEP). It is essential for the degradation of carbohydrates via glycolysis. The protein is Enolase of Bifidobacterium longum subsp. infantis (strain ATCC 15697 / DSM 20088 / JCM 1222 / NCTC 11817 / S12).